A 438-amino-acid chain; its full sequence is Ornithine aminotransferase car2 (438 aa).

N6-(pyridoxal phosphate)lysine is present on K275.

Belongs to the class-III pyridoxal-phosphate-dependent aminotransferase family. Pyridoxal 5'-phosphate is required as a cofactor.

The protein localises to the cytoplasm. It is found in the nucleus. It carries out the reaction a 2-oxocarboxylate + L-ornithine = L-glutamate 5-semialdehyde + an L-alpha-amino acid. It functions in the pathway amino-acid biosynthesis; L-proline biosynthesis; L-glutamate 5-semialdehyde from L-ornithine: step 1/1. This Schizosaccharomyces pombe (strain 972 / ATCC 24843) (Fission yeast) protein is Ornithine aminotransferase car2 (car2).